A 129-amino-acid chain; its full sequence is Small ribosomal subunit protein uS11 (129 aa).

The protein belongs to the universal ribosomal protein uS11 family. In terms of assembly, part of the 30S ribosomal subunit. Interacts with proteins S7 and S18. Binds to IF-3.

Functionally, located on the platform of the 30S subunit, it bridges several disparate RNA helices of the 16S rRNA. Forms part of the Shine-Dalgarno cleft in the 70S ribosome. The polypeptide is Small ribosomal subunit protein uS11 (Oleidesulfovibrio alaskensis (strain ATCC BAA-1058 / DSM 17464 / G20) (Desulfovibrio alaskensis)).